The chain runs to 62 residues: Photosystem II reaction center protein Z (62 aa).

Met-1 carries the post-translational modification N-formylmethionine. Residues 1-4 (MTIL) are Lumenal-facing. A helical membrane pass occupies residues 5–25 (FQLALAALVILSFVMVIGVPV). Topologically, residues 26-36 (AYASPQDWDRS) are cytoplasmic. Residues 37–58 (KQLIFLGSGLWIALVLVVGVLN) traverse the membrane as a helical segment. Topologically, residues 59 to 62 (FFVV) are lumenal.

It belongs to the PsbZ family. PSII is composed of 1 copy each of membrane proteins PsbA, PsbB, PsbC, PsbD, PsbE, PsbF, PsbH, PsbI, PsbJ, PsbK, PsbL, PsbM, PsbT, PsbX, PsbY, PsbZ, Psb30/Ycf12, peripheral proteins PsbO, CyanoQ (PsbQ), PsbU, PsbV and a large number of cofactors. It forms dimeric complexes. Part of a photosystem II (PSII) assembly intermediate complex PSII-I; crystallized from a strain deleted of psbJ, it forms monomeric PSII before addition of the oxygen evolving complex. PSII-I includes 3 assembly factors not found in mature PSII (Psb27, Psb28 and Psb34). It depends on PSII binds multiple chlorophylls, carotenoids and specific lipids. as a cofactor.

Its subcellular location is the cellular thylakoid membrane. Its function is as follows. May control the interaction of photosystem II (PSII) cores with the light-harvesting antenna, regulates electron flow through the 2 photosystem reaction centers. PSII is a light-driven water plastoquinone oxidoreductase, using light energy to abstract electrons from H(2)O, generating a proton gradient subsequently used for ATP formation. In terms of biological role, may also aid in binding of PsbK, Psb30/Ycf12 and the oxygen-evolving complex to PSII, at least in vitro. The chain is Photosystem II reaction center protein Z from Thermosynechococcus vestitus (strain NIES-2133 / IAM M-273 / BP-1).